The sequence spans 383 residues: Arginine biosynthesis bifunctional protein ArgJ (383 aa).

Positions 146, 168, 179, 259, 378, and 383 each coordinate substrate. Residue threonine 179 is the Nucleophile of the active site.

The protein belongs to the ArgJ family. In terms of assembly, heterotetramer of two alpha and two beta chains.

The protein resides in the cytoplasm. It carries out the reaction N(2)-acetyl-L-ornithine + L-glutamate = N-acetyl-L-glutamate + L-ornithine. The catalysed reaction is L-glutamate + acetyl-CoA = N-acetyl-L-glutamate + CoA + H(+). It participates in amino-acid biosynthesis; L-arginine biosynthesis; L-ornithine and N-acetyl-L-glutamate from L-glutamate and N(2)-acetyl-L-ornithine (cyclic): step 1/1. It functions in the pathway amino-acid biosynthesis; L-arginine biosynthesis; N(2)-acetyl-L-ornithine from L-glutamate: step 1/4. Its function is as follows. Catalyzes two activities which are involved in the cyclic version of arginine biosynthesis: the synthesis of N-acetylglutamate from glutamate and acetyl-CoA as the acetyl donor, and of ornithine by transacetylation between N(2)-acetylornithine and glutamate. The sequence is that of Arginine biosynthesis bifunctional protein ArgJ from Streptomyces avermitilis (strain ATCC 31267 / DSM 46492 / JCM 5070 / NBRC 14893 / NCIMB 12804 / NRRL 8165 / MA-4680).